A 90-amino-acid polypeptide reads, in one-letter code: AADCNGACSPFQMPPCGSTDCLCIPAGLLFVGYCTYPSGLSSVAKMIDEHPNLCQSDDECMKKGSGNFCARYPNNYMDYGWCFDSDSEAL.

A signal peptide is located at residue A1. Disulfide bonds link C4–C21, C8–C23, and C16–C34. The propeptide occupies 40–47; that stretch reads LSSVAKMI.

The C-terminal glycine may be removed from A1b.

A1b binds to basic 7S globulin (BG) and stimulates its phosphorylation activity. The sequence is that of Albumin-1 (LEG) from Phaseolus angularis (Azuki bean).